A 1158-amino-acid chain; its full sequence is Teashirt homolog 1 (1158 aa).

Disordered regions lie at residues 70–126, 170–228, and 310–341; these read DDGR…DMDT, INST…ANNG, and TGHY…EMEG. Residues 76 to 88 show a composition bias toward polar residues; sequence LSYQNSPLSNGTN. Composition is skewed to low complexity over residues 186 to 205 and 213 to 228; these read SHAS…ASAS and SSNS…ANNG. 2 C2H2-type zinc fingers span residues 288 to 312 and 349 to 373; these read FRCK…ETGH and LKCM…KTKH. Over residues 310 to 326 the composition is skewed to basic and acidic residues; it reads TGHYRDDNKDKEEDRGK. The segment at 405–425 is disordered; it reads PCSPDSISSTPGIPLAETAPT. The segment at 461–485 adopts a C2H2-type 3 zinc-finger fold; the sequence is LKCMECGSSHDTLQQLTAHMMVTGH. Disordered regions lie at residues 516 to 573, 656 to 681, and 693 to 748; these read PPTT…VEKS, LKSL…NHKS, and VTGK…VDKD. A compositionally biased stretch (basic and acidic residues) spans 555–573; that stretch reads EEKKIKQEKEDPSERVEKS. Positions 656-671 are enriched in low complexity; that stretch reads LKSLTSDSSTLIHSPS. Basic and acidic residues-rich tracts occupy residues 693–716 and 724–748; these read VTGK…KHLT and LKER…VDKD. The homeobox DNA-binding region spans 963–1033; it reads RKGRQSNWNP…NVKYQLRRTG (71 aa). 2 C2H2-type zinc fingers span residues 1048 to 1070 and 1115 to 1138; these read FLCS…LESH and FQCK…SKTH.

This sequence belongs to the teashirt C2H2-type zinc-finger protein family.

The protein resides in the nucleus. Probable transcriptional regulator involved in developmental processes. May act as a transcriptional repressor (Potential). This is Teashirt homolog 1 (tshz1) from Danio rerio (Zebrafish).